A 229-amino-acid polypeptide reads, in one-letter code: Urease accessory protein UreF (229 aa).

Belongs to the UreF family. In terms of assembly, ureD, UreF and UreG form a complex that acts as a GTP-hydrolysis-dependent molecular chaperone, activating the urease apoprotein by helping to assemble the nickel containing metallocenter of UreC. The UreE protein probably delivers the nickel.

Its subcellular location is the cytoplasm. Its function is as follows. Required for maturation of urease via the functional incorporation of the urease nickel metallocenter. The polypeptide is Urease accessory protein UreF (Staphylococcus aureus (strain bovine RF122 / ET3-1)).